Consider the following 625-residue polypeptide: Arginine--tRNA ligase (625 aa).

Residues 128 to 138 (VNPTKPLHMGH) carry the 'HIGH' region motif.

It belongs to the class-I aminoacyl-tRNA synthetase family.

Its subcellular location is the cytoplasm. The catalysed reaction is tRNA(Arg) + L-arginine + ATP = L-arginyl-tRNA(Arg) + AMP + diphosphate. This Pyrococcus abyssi (strain GE5 / Orsay) protein is Arginine--tRNA ligase (argS).